Reading from the N-terminus, the 89-residue chain is Small ribosomal subunit protein uS14 (89 aa).

It belongs to the universal ribosomal protein uS14 family. Part of the 30S ribosomal subunit. Contacts proteins S3 and S10.

In terms of biological role, binds 16S rRNA, required for the assembly of 30S particles and may also be responsible for determining the conformation of the 16S rRNA at the A site. The chain is Small ribosomal subunit protein uS14 from Aster yellows witches'-broom phytoplasma (strain AYWB).